A 91-amino-acid chain; its full sequence is RNA-binding protein Hfq (91 aa).

Residues 9–69 form the Sm domain; that stretch reads DRFLNMLRTG…ISTIMPSSFV (61 aa).

Belongs to the Hfq family. Homohexamer.

In terms of biological role, RNA chaperone that binds small regulatory RNA (sRNAs) and mRNAs to facilitate mRNA translational regulation in response to envelope stress, environmental stress and changes in metabolite concentrations. Also binds with high specificity to tRNAs. The chain is RNA-binding protein Hfq from Pseudothermotoga lettingae (strain ATCC BAA-301 / DSM 14385 / NBRC 107922 / TMO) (Thermotoga lettingae).